A 306-amino-acid chain; its full sequence is Replication termination factor 2 (306 aa).

Residues 192-306 (RAKLEKKTKK…HWVTHTSYCF (115 aa)) are disordered. A compositionally biased stretch (basic and acidic residues) spans 226–240 (GKSEEADPDPREKKS). S287 is subject to Phosphoserine.

This sequence belongs to the rtf2 family. Interacts with DDI2; probably also interacts with DDI1. Post-translationally, undergoes proteasomal degradation, via DDI1 and DDI2. Removal from stalled replisomes and degradation are required for genome stability.

It localises to the chromosome. Its function is as follows. Replication termination factor which is a component of the elongating replisome. Required for ATR pathway signaling upon DNA damage and has a positive activity during DNA replication. Might function to facilitate fork pausing at replication fork barriers like the rDNA. May be globally required to stimulate ATR signaling after the fork stalls or encounters a lesion. Interacts with nascent DNA. In Rattus norvegicus (Rat), this protein is Replication termination factor 2.